Reading from the N-terminus, the 215-residue chain is Probable GTP-binding protein EngB (215 aa).

The EngB-type G domain occupies 30 to 204 (TGIEVAFAGR…RQKLDTWFSE (175 aa)). GTP-binding positions include 38 to 45 (GRSNAGKS), 65 to 69 (GRTQL), 83 to 86 (DLPG), 150 to 153 (TKAD), and 183 to 185 (FSS). Residues Ser-45 and Thr-67 each contribute to the Mg(2+) site.

It belongs to the TRAFAC class TrmE-Era-EngA-EngB-Septin-like GTPase superfamily. EngB GTPase family. Mg(2+) serves as cofactor.

Necessary for normal cell division and for the maintenance of normal septation. This Escherichia coli O1:K1 / APEC protein is Probable GTP-binding protein EngB.